Reading from the N-terminus, the 235-residue chain is tRNA (guanine-N(1)-)-methyltransferase (235 aa).

S-adenosyl-L-methionine contacts are provided by residues G112 and 131-136 (LGDFVL).

This sequence belongs to the RNA methyltransferase TrmD family. Homodimer.

The protein resides in the cytoplasm. The enzyme catalyses guanosine(37) in tRNA + S-adenosyl-L-methionine = N(1)-methylguanosine(37) in tRNA + S-adenosyl-L-homocysteine + H(+). Its function is as follows. Specifically methylates guanosine-37 in various tRNAs. This is tRNA (guanine-N(1)-)-methyltransferase from Synechococcus elongatus (strain ATCC 33912 / PCC 7942 / FACHB-805) (Anacystis nidulans R2).